Consider the following 201-residue polypeptide: MTLSPLLLPLQLLLLLLFSGAVCRAEAGPETESPVRTLQVETLVQPPESCTESAAIGDTLHIHYTGSLVDGRIIDTSLTRDPLVIELGQKQVIPGLEQSLLDMCVGEKRRAVIPSHLAYGKRGYPPSIPADAVVQYDVELIALIRANYWQKLLKSILPLVGIAMVPALLGLIGYHLYRKASRPKVSKKKLKEEKRNKSKKK.

Residues 1-27 form the signal peptide; it reads MTLSPLLLPLQLLLLLLFSGAVCRAEA. Positions 57–144 constitute a PPIase FKBP-type domain; it reads GDTLHIHYTG…QYDVELIALI (88 aa). Residues 156–176 traverse the membrane as a helical segment; it reads ILPLVGIAMVPALLGLIGYHL.

It belongs to the FKBP-type PPIase family. As to quaternary structure, interacts with IFITM5.

The protein resides in the membrane. The enzyme catalyses [protein]-peptidylproline (omega=180) = [protein]-peptidylproline (omega=0). In terms of biological role, PPIases accelerate the folding of proteins during protein synthesis. The sequence is that of Peptidyl-prolyl cis-trans isomerase FKBP11 (Fkbp11) from Mus musculus (Mouse).